Here is a 110-residue protein sequence, read N- to C-terminus: Phosphoribosyl-ATP pyrophosphatase (110 aa).

The protein belongs to the PRA-PH family.

It is found in the cytoplasm. The catalysed reaction is 1-(5-phospho-beta-D-ribosyl)-ATP + H2O = 1-(5-phospho-beta-D-ribosyl)-5'-AMP + diphosphate + H(+). It functions in the pathway amino-acid biosynthesis; L-histidine biosynthesis; L-histidine from 5-phospho-alpha-D-ribose 1-diphosphate: step 2/9. This chain is Phosphoribosyl-ATP pyrophosphatase, found in Clostridium botulinum (strain Kyoto / Type A2).